A 209-amino-acid chain; its full sequence is Uracil phosphoribosyltransferase (209 aa).

5-phospho-alpha-D-ribose 1-diphosphate is bound by residues arginine 79, arginine 104, and 131–139 (DPMLATGAS). Uracil-binding positions include isoleucine 194 and 199–201 (GDA). Residue aspartate 200 coordinates 5-phospho-alpha-D-ribose 1-diphosphate.

The protein belongs to the UPRTase family. Mg(2+) serves as cofactor.

It catalyses the reaction UMP + diphosphate = 5-phospho-alpha-D-ribose 1-diphosphate + uracil. The protein operates within pyrimidine metabolism; UMP biosynthesis via salvage pathway; UMP from uracil: step 1/1. Its activity is regulated as follows. Allosterically activated by GTP. Functionally, catalyzes the conversion of uracil and 5-phospho-alpha-D-ribose 1-diphosphate (PRPP) to UMP and diphosphate. This Staphylococcus aureus (strain JH1) protein is Uracil phosphoribosyltransferase.